The sequence spans 154 residues: Ribonuclease 8 (154 aa).

Positions 1–27 (MAPARAGCCPLLLLLLGLWVAEVLVRA) are cleaved as a signal peptide. His42 serves as the catalytic Proton acceptor. Cystine bridges form between Cys50–Cys93, Cys64–Cys118, Cys82–Cys133, and Cys89–Cys96. Substrate is bound by residues 65–69 (KDLNT) and Lys90. Catalysis depends on His149, which acts as the Proton donor.

The protein belongs to the pancreatic ribonuclease family. As to expression, expressed prominently in the placenta and is not detected in any other tissues examined.

It localises to the secreted. Functionally, has a low ribonuclease activity. This Homo sapiens (Human) protein is Ribonuclease 8 (RNASE8).